A 93-amino-acid polypeptide reads, in one-letter code: YcgL domain-containing protein AHA_2135 (93 aa).

The region spanning 1-85 (MLCAVYKSRK…PPENLLEQHK (85 aa)) is the YcgL domain.

The polypeptide is YcgL domain-containing protein AHA_2135 (Aeromonas hydrophila subsp. hydrophila (strain ATCC 7966 / DSM 30187 / BCRC 13018 / CCUG 14551 / JCM 1027 / KCTC 2358 / NCIMB 9240 / NCTC 8049)).